The following is a 756-amino-acid chain: MSVQSNSNSSGSLDGAPSCSQFSTGSPTPGSVSPLDIFAPRRHKEGMDELHSLDPRRQELLEARFIGAVSGNTGGSTGSASGGPKGLNNNECSSHSFGSLGSSSDKESETPEKKHFESSRGRKRKVDNQSESSQGKSSGRGPKISDYFDFQGGNGSSPVRGLPSVLRSPQNSHSAPGAIVRQNSSSPTSLCFMDHTMNLKQLSSRSVQTDLTLLKLAALESNKNLDLEKKEGRIDDLLRANCDLRRQIDEQQKLLERFKERLNKCTTMSKKLLIEKSTQEKQSCREKSMQDRLRLGHFTTVRHGASYSEQWTDGYAFQNLVKQQEWINQQREEIERQRKLLAKRKPSSTPSSQSPTPNESKQRKTKAVNGADNDPFLKPSLPTLLTVAEYHEQEEIFKLRLGHLKKEEAEIQAELERLERVRNLHIRELKRINNEDSSQFKDHPTLNERYLLLHLLGRGGFSEVYKAFDLFEQRYAAVKIHQLNKNWREEKKENYHKHACREYRIHKQLDHPRIVKLYDYFSLDTDTFCTVLEFCEGNDLDFYLKQHKLMSEKEARSIVMQIVNALRYLNEIKPSIIHYDLKPGNILLVDGTACGEIKITDFGLSKIMDDDSYGVDGMDLTSQGAGTYWYLPPECFVVGKEPPKISNKVDVWSVGVIFFQCLYGRKPFGHNQSQQDILQENTILKATEVQFPAKPVASNEAKAFIRRCLAYRKEDRSDVHQLGSDSYLLPHMRRSNSSGNLQATPASPAPSGIISY.

2 stretches are compositionally biased toward low complexity: residues 1–12 (MSVQSNSNSSGS) and 23–34 (STGSPTPGSVSP). Disordered regions lie at residues 1 to 56 (MSVQ…LDPR) and 69 to 185 (VSGN…QNSS). The span at 45–56 (EGMDELHSLDPR) shows a compositional bias: basic and acidic residues. The segment covering 72 to 85 (NTGGSTGSASGGPK) has biased composition (gly residues). A compositionally biased stretch (low complexity) spans 93-103 (SSHSFGSLGSS). The segment covering 104-120 (SDKESETPEKKHFESSR) has biased composition (basic and acidic residues). Residues 243–268 (DLRRQIDEQQKLLERFKERLNKCTTM) are a coiled coil. Residues 339–375 (KLLAKRKPSSTPSSQSPTPNESKQRKTKAVNGADNDP) form a disordered region. The segment covering 347 to 357 (SSTPSSQSPTP) has biased composition (low complexity). Residues 397–435 (FKLRLGHLKKEEAEIQAELERLERVRNLHIRELKRINNE) are a coiled coil. One can recognise a Protein kinase domain in the interval 450–728 (YLLLHLLGRG…VHQLGSDSYL (279 aa)). ATP contacts are provided by residues 456–464 (LGRGGFSEV) and Lys-479. Asp-580 serves as the catalytic Proton acceptor. Residues 734-756 (RSNSSGNLQATPASPAPSGIISY) form a disordered region. The segment covering 735–745 (SNSSGNLQATP) has biased composition (polar residues).

It belongs to the protein kinase superfamily. Ser/Thr protein kinase family. Mg(2+) serves as cofactor.

It localises to the nucleus. It catalyses the reaction L-seryl-[protein] + ATP = O-phospho-L-seryl-[protein] + ADP + H(+). The enzyme catalyses L-threonyl-[protein] + ATP = O-phospho-L-threonyl-[protein] + ADP + H(+). The protein is Serine/threonine-protein kinase tousled-like 1-B (tlk1b) of Danio rerio (Zebrafish).